A 994-amino-acid chain; its full sequence is Cation-chloride cotransporter 2 (994 aa).

The disordered stretch occupies residues 1–28 (MERGGFGGAGRHDEEAPAMRPAPQQRYR). Residues 1–139 (MERGGFGGAG…GHPKETETKL (139 aa)) are Cytoplasmic-facing. Residues 140–160 (DTMMGVFVPCLQNILGIIYYI) traverse the membrane as a helical segment. Topologically, residues 161–174 (RFTWIVGMGGVWQS) are extracellular. The helical transmembrane segment at 175-195 (LVLVAFCGSCTFLTTISLSAI) threads the bilayer. Over 196–221 (ATNGAMKGGGPYYLIGRALGPEVGVS) the chain is Cytoplasmic. The helical transmembrane segment at 222 to 242 (IGLCFFLGNAVAGAMYVLGAV) threads the bilayer. Over 243 to 287 (ETFLDAVPSAEFFQESVTVVTNTFVNGTAAGNATTISTPNLHDLQ) the chain is Extracellular. N-linked (GlcNAc...) asparagine glycosylation is found at Asn-268 and Asn-274. Residues 288–308 (VYGIIVTILLCFIVFGGVKII) traverse the membrane as a helical segment. Topologically, residues 309–311 (NKV) are cytoplasmic. A helical membrane pass occupies residues 312–332 (APAFLIPVLFSILCIYIGVFI). Over 333–372 (APRPNASKWITGLSITTLKDNWSSDYQRTNNAGVPDPNGS) the chain is Extracellular. Residues Asn-337, Asn-353, and Asn-370 are each glycosylated (N-linked (GlcNAc...) asparagine). A helical membrane pass occupies residues 373–393 (IYWDFNALLGLYFPAVTGIMA). At 394–412 (GSNRSASLKDTQRSIPIGT) the chain is on the cytoplasmic side. A helical membrane pass occupies residues 413–433 (LHATISTTMMYLLSVFLFGAL). Topologically, residues 434-448 (STREGLLTDRLLCAA) are extracellular. Residues 449 to 469 (VAWPSPAVVYAGIILSTLGAA) form a helical membrane-spanning segment. Over 470 to 505 (LQSLTGAPRLLAAIANDDILPVLNYFKAYEGSEPHV) the chain is Cytoplasmic. A helical membrane pass occupies residues 506-526 (ATLFTSFICISCVIIGNLDVI). At 527 to 529 (TPT) the chain is on the extracellular side. The chain crosses the membrane as a helical span at residues 530 to 552 (ITMFFLLCYAGVNLSCFLLDLLD). Residues 553-558 (APSWRP) lie on the Cytoplasmic side of the membrane. Residues 559–579 (RWKLHHWSLSLIGALLCIVIM) form a helical membrane-spanning segment. The Extracellular segment spans residues 580–585 (FMISWT). A helical transmembrane segment spans residues 586–606 (FTVVSLALASLIYYYVSLKGK). At 607–994 (AGDWGDGFKS…YRRDVVTLFT (388 aa)) the chain is on the cytoplasmic side.

Belongs to the SLC12A transporter family.

Its subcellular location is the membrane. Its function is as follows. Probable cation/chloride cotransporter. This is Cation-chloride cotransporter 2 (CCC2) from Oryza sativa subsp. japonica (Rice).